The primary structure comprises 369 residues: 3,7-dimethylxanthine N-methyltransferase TCS1 (369 aa).

Tyrosine 24 is an S-adenosyl-L-homocysteine binding site. Threonine 31 lines the caffeine pocket. Positions 66, 71, 103, 104, 138, and 139 each coordinate S-adenosyl-L-homocysteine. Caffeine is bound by residues tyrosine 156, histidine 159, and tryptophan 160. A Mg(2+)-binding site is contributed by asparagine 177. Arginine 225 contributes to the caffeine binding site. Mg(2+) contacts are provided by aspartate 263, phenylalanine 265, and asparagine 266. Phenylalanine 321 contributes to the caffeine binding site.

The protein belongs to the methyltransferase superfamily. Type-7 methyltransferase family. Mg(2+) is required as a cofactor. In terms of tissue distribution, expressed in young leaves and flowers.

It carries out the reaction 7-methylxanthine + S-adenosyl-L-methionine = theobromine + S-adenosyl-L-homocysteine + H(+). The catalysed reaction is theobromine + S-adenosyl-L-methionine = caffeine + S-adenosyl-L-homocysteine + H(+). It catalyses the reaction 1,7-dimethylxanthine + S-adenosyl-L-methionine = caffeine + S-adenosyl-L-homocysteine + H(+). The protein operates within alkaloid biosynthesis. Involved in the biosynthesis of caffeine. Catalyzes the conversion of 7-methylxanthine (7mX) to theobromine and of theobromine to caffeine. Has 3-N- and 1-N-methylation activity. The polypeptide is 3,7-dimethylxanthine N-methyltransferase TCS1 (Camellia sinensis (Tea plant)).